A 205-amino-acid chain; its full sequence is Urease accessory protein UreE (205 aa).

Positions 178 to 196 (AHFHAGGHGHVHSGHGHGG) are enriched in basic residues. The segment at 178 to 205 (AHFHAGGHGHVHSGHGHGGKHGEHDAES) is disordered.

It belongs to the UreE family.

Its subcellular location is the cytoplasm. Involved in urease metallocenter assembly. Binds nickel. Probably functions as a nickel donor during metallocenter assembly. The chain is Urease accessory protein UreE from Bordetella pertussis (strain Tohama I / ATCC BAA-589 / NCTC 13251).